The primary structure comprises 202 residues: Holliday junction branch migration complex subunit RuvA (202 aa).

The interval methionine 1–alanine 65 is domain I. Positions threonine 66–leucine 144 are domain II. The flexible linker stretch occupies residues valine 145–arginine 155. The domain III stretch occupies residues arginine 155–arginine 202.

The protein belongs to the RuvA family. As to quaternary structure, homotetramer. Forms an RuvA(8)-RuvB(12)-Holliday junction (HJ) complex. HJ DNA is sandwiched between 2 RuvA tetramers; dsDNA enters through RuvA and exits via RuvB. An RuvB hexamer assembles on each DNA strand where it exits the tetramer. Each RuvB hexamer is contacted by two RuvA subunits (via domain III) on 2 adjacent RuvB subunits; this complex drives branch migration. In the full resolvosome a probable DNA-RuvA(4)-RuvB(12)-RuvC(2) complex forms which resolves the HJ.

The protein resides in the cytoplasm. Its function is as follows. The RuvA-RuvB-RuvC complex processes Holliday junction (HJ) DNA during genetic recombination and DNA repair, while the RuvA-RuvB complex plays an important role in the rescue of blocked DNA replication forks via replication fork reversal (RFR). RuvA specifically binds to HJ cruciform DNA, conferring on it an open structure. The RuvB hexamer acts as an ATP-dependent pump, pulling dsDNA into and through the RuvAB complex. HJ branch migration allows RuvC to scan DNA until it finds its consensus sequence, where it cleaves and resolves the cruciform DNA. In Nitratidesulfovibrio vulgaris (strain ATCC 29579 / DSM 644 / CCUG 34227 / NCIMB 8303 / VKM B-1760 / Hildenborough) (Desulfovibrio vulgaris), this protein is Holliday junction branch migration complex subunit RuvA.